The following is a 490-amino-acid chain: Aspartyl/glutamyl-tRNA(Asn/Gln) amidotransferase subunit B (490 aa).

It belongs to the GatB/GatE family. GatB subfamily. Heterotrimer of A, B and C subunits.

It carries out the reaction L-glutamyl-tRNA(Gln) + L-glutamine + ATP + H2O = L-glutaminyl-tRNA(Gln) + L-glutamate + ADP + phosphate + H(+). It catalyses the reaction L-aspartyl-tRNA(Asn) + L-glutamine + ATP + H2O = L-asparaginyl-tRNA(Asn) + L-glutamate + ADP + phosphate + 2 H(+). Functionally, allows the formation of correctly charged Asn-tRNA(Asn) or Gln-tRNA(Gln) through the transamidation of misacylated Asp-tRNA(Asn) or Glu-tRNA(Gln) in organisms which lack either or both of asparaginyl-tRNA or glutaminyl-tRNA synthetases. The reaction takes place in the presence of glutamine and ATP through an activated phospho-Asp-tRNA(Asn) or phospho-Glu-tRNA(Gln). This chain is Aspartyl/glutamyl-tRNA(Asn/Gln) amidotransferase subunit B, found in Methylobacterium sp. (strain 4-46).